Reading from the N-terminus, the 252-residue chain is Neurovirulence factor ICP34.5 (252 aa).

Basic residues predominate over residues 1–15 (MARRRRRHRGPRRPR). The required for nucleolar localization stretch occupies residues 1–17 (MARRRRRHRGPRRPRPP). Disordered stretches follow at residues 1–129 (MARR…PFRL) and 150–179 (RRAGGEGAPEPPATPATPATPATPATPATP). The span at 25–36 (TAQSQVTSTPNS) shows a compositional bias: polar residues. Residues 46 to 59 (AAPPPPPAGGPPPS) show a composition bias toward pro residues. Residues 74 to 84 (ASDDDDDDDWP) are compositionally biased toward acidic residues. Pro residues-rich tracts occupy residues 85 to 94 (DSPPPEPAPE) and 120 to 129 (SHPPSRPFRL). The short motif at 129-138 (LPPRLALRLR) is the Nuclear export signal element. Tandem repeats lie at residues 162-164 (ATP), 165-167 (ATP), 168-170 (ATP), 171-173 (ATP), 174-176 (ATP), and 177-179 (ATP). A 6 X 3 AA tandem repeats of A-T-P region spans residues 162–179 (ATPATPATPATPATPATP). Over residues 165–179 (ATPATPATPATPATP) the composition is skewed to low complexity. Positions 179 to 192 (PARVRFSPHVRVRH) are binding to PP1CA. The interval 179–192 (PARVRFSPHVRVRH) is interaction with host PPP1CA. The segment at 194 to 252 (VVWASAARLARRGSWARERADRARFRRRVAEAEAVIGPCLGPKARARALARGAGPANSV) is important for interferon resistance. The short motif at 204-222 (RRGSWARERADRARFRRRV) is the Bipartite nuclear localization signal element. An interaction with host EIF2S1/EIF-2ALPHA region spans residues 222-237 (VAEAEAVIGPCLGPKA).

This sequence belongs to the PPP1R15 family. As to quaternary structure, interacts with host PPP1CA to form a high-molecular-weight complex that dephosphorylates EIF2S1/eIF-2alpha. Interacts with host EIF2S1/eIF-2alpha; this interaction is crucial for the specific dephosphorylation of EIF2S1/eIF-2alpha by PPP1CA. Binds to proliferating cell nuclear antigen (PCNA), which may release host cells from growth arrest and facilitate viral replication. Interacts (via N-terminus) with host C1QBP and PRKCA. Interacts with protein UL31. Interacts with host TBK1. Interacts with host STING/TMEM173; this interaction inhibits the intracellular DNA sensing pathway. Interacts with host BECN1; this interaction modulates host autophagy.

Its subcellular location is the host cytoplasm. The protein localises to the host nucleus. It localises to the host nucleolus. It is found in the virion. In terms of biological role, inhibits the establishment of the immune response and of the integrated stress response (ISR) in the infected cell. Plays essential roles in viral nuclear egress to mediate capsid transit across the nuclear membrane. Facilitates nuclear egress cooperatively with host C1QBP and protein kinase C/PKC to induce lamin A/C phosphorylation and subsequent reorganization. In turn, lamina disassembles and nuclear egress occurs. Recruits the serine/threonine protein phosphatase PPP1CA/PP1-alpha to dephosphorylate the translation initiation factor EIF2S1/eIF-2alpha, thereby couteracting the host shutoff of protein synthesis involving double-stranded RNA-dependent protein kinase EIF2AK2/PKR. In turn, controls host IRF3 activation and subsequently inhibits host interferon response. Controls the DNA sensing pathway by interacting with and inhibiting host STING/TMEM173. Also down-modulates the host MHC class II proteins cell surface expression. Acts as a neurovirulence factor that has a profound effect on the growth of the virus in central nervous system tissue, by interacting with host BECN1 and thereby antagonizing the host autophagy response. The protein is Neurovirulence factor ICP34.5 (RL1) of Human herpesvirus 1 (strain CVG-2) (HHV-1).